The following is a 355-amino-acid chain: Protein-tyrosine sulfotransferase 1 (355 aa).

Residues 1 to 8 (MIGKLKQN) lie on the Cytoplasmic side of the membrane. Residues 9–25 (LLVACLVISSVTVFYLC) traverse the membrane as a helical; Signal-anchor for type II membrane protein segment. Topologically, residues 26–355 (RHAMDCHHRI…QKSPEKPNPS (330 aa)) are lumenal. N-linked (GlcNAc...) asparagine glycosylation occurs at Asn-55. 3'-phosphoadenylyl sulfate is bound at residue 76-80 (RSGTT). Cys-94 and Cys-154 are oxidised to a cystine. Glu-97 (proton donor/acceptor) is an active-site residue. The segment at 99 to 103 (RVIPR) is interaction with peptide substrate. Arg-181, Ser-189, and Arg-193 together coordinate 3'-phosphoadenylyl sulfate. A disulfide bridge links Cys-223 with Cys-230. 3'-phosphoadenylyl sulfate is bound by residues Tyr-235, 282 to 291 (STDQVIKPVN), and Lys-297. The interval 325–355 (HANPPNYGRPDPLVLDNTRRLQKSPEKPNPS) is disordered. The segment covering 341–355 (NTRRLQKSPEKPNPS) has biased composition (basic and acidic residues).

This sequence belongs to the protein sulfotransferase family.

The protein localises to the golgi apparatus membrane. It catalyses the reaction L-tyrosyl-[protein] + 3'-phosphoadenylyl sulfate = O-sulfo-L-tyrosine-[protein] + adenosine 3',5'-bisphosphate + H(+). Functionally, catalyzes the O-sulfation of tyrosine residues within acidic motifs of polypeptides, using 3'-phosphoadenylyl sulfate (PAPS) as cosubstrate. This is Protein-tyrosine sulfotransferase 1 (tpst1) from Danio rerio (Zebrafish).